Consider the following 324-residue polypeptide: Methionyl-tRNA formyltransferase (324 aa).

Residue 114–117 (SLLP) participates in (6S)-5,6,7,8-tetrahydrofolate binding.

This sequence belongs to the Fmt family.

The catalysed reaction is L-methionyl-tRNA(fMet) + (6R)-10-formyltetrahydrofolate = N-formyl-L-methionyl-tRNA(fMet) + (6S)-5,6,7,8-tetrahydrofolate + H(+). Its function is as follows. Attaches a formyl group to the free amino group of methionyl-tRNA(fMet). The formyl group appears to play a dual role in the initiator identity of N-formylmethionyl-tRNA by promoting its recognition by IF2 and preventing the misappropriation of this tRNA by the elongation apparatus. This Parabacteroides distasonis (strain ATCC 8503 / DSM 20701 / CIP 104284 / JCM 5825 / NCTC 11152) protein is Methionyl-tRNA formyltransferase.